The chain runs to 100 residues: MNRLSASERQAALRELPGWLELEEREAIGRSYQFTDFSEAFGFMTRVALAAEKADHHPEWRNVYRTVDVVLTTHDAGGVTERDVKLAKAMDAIAERCGAR.

It belongs to the pterin-4-alpha-carbinolamine dehydratase family.

It catalyses the reaction (4aS,6R)-4a-hydroxy-L-erythro-5,6,7,8-tetrahydrobiopterin = (6R)-L-erythro-6,7-dihydrobiopterin + H2O. This chain is Putative pterin-4-alpha-carbinolamine dehydratase, found in Rhodopseudomonas palustris (strain TIE-1).